A 224-amino-acid polypeptide reads, in one-letter code: Inner membrane-spanning protein YciB (224 aa).

6 consecutive transmembrane segments (helical) span residues glycine 20–alanine 40, isoleucine 61–leucine 81, leucine 86–tyrosine 106, leucine 123–phenylalanine 143, lysine 156–tryptophan 176, and phenylalanine 187–isoleucine 207.

It belongs to the YciB family.

It is found in the cell inner membrane. Plays a role in cell envelope biogenesis, maintenance of cell envelope integrity and membrane homeostasis. The protein is Inner membrane-spanning protein YciB of Mesorhizobium japonicum (strain LMG 29417 / CECT 9101 / MAFF 303099) (Mesorhizobium loti (strain MAFF 303099)).